The sequence spans 297 residues: Homoserine kinase (297 aa).

82-92 contributes to the ATP binding site; the sequence is PVSRGLGSSAA.

The protein belongs to the GHMP kinase family. Homoserine kinase subfamily.

It localises to the cytoplasm. It carries out the reaction L-homoserine + ATP = O-phospho-L-homoserine + ADP + H(+). The protein operates within amino-acid biosynthesis; L-threonine biosynthesis; L-threonine from L-aspartate: step 4/5. Catalyzes the ATP-dependent phosphorylation of L-homoserine to L-homoserine phosphate. In Clostridium botulinum (strain 657 / Type Ba4), this protein is Homoserine kinase.